Here is a 617-residue protein sequence, read N- to C-terminus: Proline--tRNA ligase (617 aa).

Belongs to the class-II aminoacyl-tRNA synthetase family. ProS type 1 subfamily. In terms of assembly, homodimer.

Its subcellular location is the cytoplasm. The catalysed reaction is tRNA(Pro) + L-proline + ATP = L-prolyl-tRNA(Pro) + AMP + diphosphate. Functionally, catalyzes the attachment of proline to tRNA(Pro) in a two-step reaction: proline is first activated by ATP to form Pro-AMP and then transferred to the acceptor end of tRNA(Pro). As ProRS can inadvertently accommodate and process non-cognate amino acids such as alanine and cysteine, to avoid such errors it has two additional distinct editing activities against alanine. One activity is designated as 'pretransfer' editing and involves the tRNA(Pro)-independent hydrolysis of activated Ala-AMP. The other activity is designated 'posttransfer' editing and involves deacylation of mischarged Ala-tRNA(Pro). The misacylated Cys-tRNA(Pro) is not edited by ProRS. The sequence is that of Proline--tRNA ligase from Streptococcus pneumoniae (strain CGSP14).